The sequence spans 362 residues: Homeobox protein Nkx-2.3 (362 aa).

Disordered stretches follow at residues 126–149 and 203–222; these read EAAG…RKPR and QRQD…PPRR. Residues 132 to 141 show a composition bias toward basic and acidic residues; it reads KTSEDGERPK. Positions 145–204 form a DNA-binding region, homeobox; the sequence is RRKPRVLFSQAQVFELERRFKQQRYLSAPEREHLASSLKLTSTQVKIWFQNRRYKCKRQR.

It belongs to the NK-2 homeobox family. Expressed in spleen and intestine. Also expressed in salivary gland and tongue.

The protein localises to the nucleus. Its function is as follows. Transcriptional regulator essential for normal development and functions of the small intestine and spleen. Activates directly MADCAM1 expression. Required for homing of lymphocytes in spleen and mucosa-associated lymphoid tissue. May have a role during pharyngeal organogenesis. The chain is Homeobox protein Nkx-2.3 (Nkx2-3) from Mus musculus (Mouse).